A 593-amino-acid polypeptide reads, in one-letter code: MPRTLSLHEITDLLETDDSIEASAIVIQPPENATAPVSDEESGDEEGGTINNLPGSLLHTAAYLIQDGSDAESDSDDPSYAPKDDSPDEVPSTFTVQQPPPSRRRKMTKILCKWKKADLTVQPVAGRVTAPPNDFFTVMRTPTEILELFLDDEVIELIVKYSNLYACSKGVHLGLTSSEFKCFLGIIFLSGYVSVPRRRMFWEQRTDVHNVLVSAAMRRDRFETIFSNLHVADNANLDPVDKFSKLRPLISKLNERCMKFVPNETYFSFDEFMVPYFGRHGCKQFIRGKPIRFGYKFWCGATCLGYICWFQPYQGKNPNTKHEEYGVGASLVLQFSEALTEAHPGQYHFVFNNFFTSIALLDKLSSMGHQATGTVRKDHIDRVPLESDVALKKKERGTFDYRIDGKGNIVCRWNDNSVVTVASSGAGIHPLCLVSRYSQKLKKKIQVQQPNMIKVYNQFMGGVDRADENIDKYRASIRGKKWYSSPLLFCFELVLQNAWQLHKTYDEKPVDFLEFRRRVVCHYLETHGHPPEPGQKGRPQKRNIDSRYDGINHVIVKQGKQTRCAECHKNTTFRCEKCDVALHVKCSVEYHTE.

Disordered regions lie at residues 27 to 53 (IQPP…INNL) and 69 to 105 (SDAE…SRRR). Over residues 38 to 47 (SDEESGDEEG) the composition is skewed to acidic residues. The residue at position 86 (serine 86) is a Phosphoserine.

As to expression, expressed in heart and oocytes, but not in granulosa cells (at protein level).

The protein localises to the nucleus. In terms of biological role, binds in vitro to PGBD3-related transposable elements, called MER85s; these non-autonomous 140 bp elements are characterized by the presence of PGBD3 terminal inverted repeats and the absence of internal transposase ORF. The sequence is that of PiggyBac transposable element-derived protein 3 (PGBD3) from Homo sapiens (Human).